A 372-amino-acid chain; its full sequence is Flagellar P-ring protein (372 aa).

Residues 1–26 form the signal peptide; it reads MNLSSLPFRLLAAAVALCAIAAPASA.

This sequence belongs to the FlgI family. The basal body constitutes a major portion of the flagellar organelle and consists of four rings (L,P,S, and M) mounted on a central rod.

Its subcellular location is the periplasm. The protein resides in the bacterial flagellum basal body. Functionally, assembles around the rod to form the L-ring and probably protects the motor/basal body from shearing forces during rotation. The protein is Flagellar P-ring protein of Xanthomonas axonopodis pv. citri (strain 306).